We begin with the raw amino-acid sequence, 2148 residues long: General transcription factor 3C polypeptide 1 (2148 aa).

Over residues 473 to 487 the composition is skewed to acidic residues; the sequence is GEEAFLSDSESEEES. Disordered stretches follow at residues 473 to 568 and 587 to 609; these read GEEA…FDPH and NPKE…KPHK. The span at 491 to 502 shows a compositional bias: basic residues; it reads GKRRGRGSRGHS. Residue lysine 533 forms a Glycyl lysine isopeptide (Lys-Gly) (interchain with G-Cter in SUMO2) linkage. Serine 666 bears the Phosphoserine mark. 2 disordered regions span residues 717–771 and 818–863; these read STAN…EKMG and TGEQ…SSWE. 2 stretches are compositionally biased toward basic and acidic residues: residues 759–770 and 825–835; these read ESTRVKKTDEKM and HSERKTGKQEP. Residues lysine 769 and lysine 832 each participate in a glycyl lysine isopeptide (Lys-Gly) (interchain with G-Cter in SUMO2) cross-link. Serine 1062 bears the Phosphoserine mark. The segment covering 1186 to 1195 has biased composition (basic and acidic residues); sequence EHFELDREPT. Disordered stretches follow at residues 1186–1238, 1597–1627, 1823–1881, 1893–1928, and 2127–2148; these read EHFE…KKLR, KSLG…SVEV, KASG…LPAK, SPRP…ESVG, and PRPS…ATSR. Threonine 1195 is modified (phosphothreonine). Positions 1198-1214 are enriched in basic residues; that stretch reads RNRKVRGGKSQKRKRLK. Residues 1228–1238 are compositionally biased toward basic and acidic residues; the sequence is EHPEAKSKKLR. The span at 1605-1616 shows a compositional bias: acidic residues; the sequence is LDDDDEEEDLDE. Phosphoserine is present on residues serine 1624, serine 1853, and serine 1893. Low complexity predominate over residues 1903 to 1912; the sequence is EAQAQFAAPE. Residues 2132 to 2148 show a composition bias toward polar residues; sequence SCYQSSAQPSTGVATSR.

It belongs to the TFIIIC subunit 1 family. As to quaternary structure, part of the TFIIIC subcomplex TFIIIC2, consisting of six subunits, GTF3C1, GTF3C2, GTF3C3, GTF3C4, GTF3C5 and GTF3C6. Interacts with IGHMBP2. Interacts with MAF1.

It is found in the nucleus. Functionally, required for RNA polymerase III-mediated transcription. Component of TFIIIC that initiates transcription complex assembly on tRNA and is required for transcription of 5S rRNA and other stable nuclear and cytoplasmic RNAs. Binds to the box B promoter element. The polypeptide is General transcription factor 3C polypeptide 1 (Gtf3c1) (Rattus norvegicus (Rat)).